The chain runs to 324 residues: Gamma-soluble NSF attachment protein (324 aa).

Residues 285 to 298 are compositionally biased toward polar residues; sequence NPTINSTAPQQQYS. The segment at 285 to 324 is disordered; sequence NPTINSTAPQQQYSNTTTTTTNNTNNNNPTSQQDDDEDVL. Positions 299 to 312 are enriched in low complexity; the sequence is NTTTTTTNNTNNNN.

The protein belongs to the SNAP family. Interacts with nsfA and probably SNARE proteins.

The protein localises to the cytoplasmic vesicle membrane. In terms of biological role, may be required for vesicular transport between the endoplasmic reticulum and the Golgi apparatus. Involved in vesicle fusion with nsfA and probably SNARE proteins. The polypeptide is Gamma-soluble NSF attachment protein (snpC) (Dictyostelium discoideum (Social amoeba)).